The sequence spans 184 residues: Putative YfeABCD regulator YfeE (184 aa).

A run of 3 helical transmembrane segments spans residues 15 to 35, 84 to 104, and 162 to 182; these read IAGWLVFIPALLSTLISIINF, LSAGNIMFFIIYMLIFVGLSL, and ILPSVIGVLGYFVIKLLGIMI.

It to E.coli YniB.

The protein localises to the cell membrane. Its function is as follows. Putative regulator of YfeABCD, an ABC transporter locus involved in inorganic iron transport. The chain is Putative YfeABCD regulator YfeE (yfeE) from Yersinia pestis.